The primary structure comprises 271 residues: Probable diacyglycerol O-acyltransferase tgs3 (271 aa).

Belongs to the long-chain O-acyltransferase family.

It carries out the reaction an acyl-CoA + a 1,2-diacyl-sn-glycerol = a triacyl-sn-glycerol + CoA. The protein operates within glycerolipid metabolism; triacylglycerol biosynthesis. Functionally, catalyzes the terminal and only committed step in triacylglycerol synthesis by using diacylglycerol and fatty acyl CoA as substrates. Required for storage lipid synthesis. The polypeptide is Probable diacyglycerol O-acyltransferase tgs3 (tgs3) (Mycobacterium tuberculosis (strain CDC 1551 / Oshkosh)).